A 263-amino-acid polypeptide reads, in one-letter code: MARRPLVMGNWKLNGSKAFTKELIEGLKAELHDVTGCDVAIAPPVMYLGTAEAALSGCGCNCGGKSVIQLGAQNVDINVKGAFTGDISTEMLKDFGAKYIIIGHSERRTYHKESDEFVAKKFGALKEAGLVPVLCIGESEAENEAGKTEEVCARQIDAVINALGVEAFNGAVIAYEPIWAIGTGKSATPAQAQAVHAFIRGHIAAKSQAVAEQVIIQYGGSVNDANAAELFTQPDIDGALVGGASLKAPAFAVIVKAAAAAKN.

Position 10 to 12 (Asn10 to Lys12) interacts with substrate. Residue His104 is the Electrophile of the active site. Glu176 functions as the Proton acceptor in the catalytic mechanism. Substrate-binding positions include Gly182, Ser221, and Gly242 to Gly243.

This sequence belongs to the triosephosphate isomerase family. In terms of assembly, homodimer.

The protein localises to the cytoplasm. The catalysed reaction is D-glyceraldehyde 3-phosphate = dihydroxyacetone phosphate. It functions in the pathway carbohydrate biosynthesis; gluconeogenesis. Its pathway is carbohydrate degradation; glycolysis; D-glyceraldehyde 3-phosphate from glycerone phosphate: step 1/1. Involved in the gluconeogenesis. Catalyzes stereospecifically the conversion of dihydroxyacetone phosphate (DHAP) to D-glyceraldehyde-3-phosphate (G3P). The sequence is that of Triosephosphate isomerase from Haemophilus influenzae (strain PittEE).